Here is a 509-residue protein sequence, read N- to C-terminus: 2,3-bisphosphoglycerate-independent phosphoglycerate mutase (509 aa).

D11 lines the Mn(2+) pocket. The residue at position 35 (Y35) is a Phosphotyrosine. S61 contacts Mn(2+). The active-site Phosphoserine intermediate is S61. Substrate-binding positions include H122, 152–153 (RD), R184, R190, 260–263 (RPDR), and K335. The Mn(2+) site is built by D402, H406, D443, H444, and H461.

It belongs to the BPG-independent phosphoglycerate mutase family. As to quaternary structure, monomer. Requires Mn(2+) as cofactor.

The enzyme catalyses (2R)-2-phosphoglycerate = (2R)-3-phosphoglycerate. Its pathway is carbohydrate degradation; glycolysis; pyruvate from D-glyceraldehyde 3-phosphate: step 3/5. Functionally, essential for rapid growth and for sporulation. Catalyzes the interconversion of 2-phosphoglycerate and 3-phosphoglycerate. The polypeptide is 2,3-bisphosphoglycerate-independent phosphoglycerate mutase (Bacillus cereus (strain ATCC 10987 / NRS 248)).